The following is a 95-amino-acid chain: Acylphosphatase (95 aa).

An Acylphosphatase-like domain is found at 10–95 (CIHATVSGKV…VEDYSDFRVR (86 aa)). Residues arginine 25 and asparagine 43 contribute to the active site.

The protein belongs to the acylphosphatase family.

The catalysed reaction is an acyl phosphate + H2O = a carboxylate + phosphate + H(+). The sequence is that of Acylphosphatase (acyP) from Coxiella burnetii (strain Dugway 5J108-111).